The following is a 488-amino-acid chain: 3-octaprenyl-4-hydroxybenzoate carboxy-lyase (488 aa).

Asn172 contacts Mn(2+). Residues 175–177 (IYR), 189–191 (RWL), and 194–195 (RG) contribute to the prenylated FMN site. Glu238 is a binding site for Mn(2+). The active-site Proton donor is Asp287.

Belongs to the UbiD family. Homohexamer. Prenylated FMN serves as cofactor. Mn(2+) is required as a cofactor.

Its subcellular location is the cell membrane. The enzyme catalyses a 4-hydroxy-3-(all-trans-polyprenyl)benzoate + H(+) = a 2-(all-trans-polyprenyl)phenol + CO2. It functions in the pathway cofactor biosynthesis; ubiquinone biosynthesis. In terms of biological role, catalyzes the decarboxylation of 3-octaprenyl-4-hydroxy benzoate to 2-octaprenylphenol, an intermediate step in ubiquinone biosynthesis. The polypeptide is 3-octaprenyl-4-hydroxybenzoate carboxy-lyase (Pseudomonas fluorescens (strain Pf0-1)).